A 322-amino-acid chain; its full sequence is Transaldolase (322 aa).

K136 acts as the Schiff-base intermediate with substrate in catalysis.

This sequence belongs to the transaldolase family. Type 1 subfamily. As to quaternary structure, homodimer.

The protein resides in the cytoplasm. It carries out the reaction D-sedoheptulose 7-phosphate + D-glyceraldehyde 3-phosphate = D-erythrose 4-phosphate + beta-D-fructose 6-phosphate. The protein operates within carbohydrate degradation; pentose phosphate pathway; D-glyceraldehyde 3-phosphate and beta-D-fructose 6-phosphate from D-ribose 5-phosphate and D-xylulose 5-phosphate (non-oxidative stage): step 2/3. Its function is as follows. Transaldolase is important for the balance of metabolites in the pentose-phosphate pathway. This Xanthomonas oryzae pv. oryzae (strain KACC10331 / KXO85) protein is Transaldolase.